Here is a 369-residue protein sequence, read N- to C-terminus: Deoxyhypusine synthase (369 aa).

NAD(+)-binding positions include 105–109 (SNLIS), 131–133 (TAG), Glu137, and Asp238. A spermidine-binding site is contributed by 136–137 (EE). A spermidine-binding site is contributed by Asp243. Gly283 contributes to the NAD(+) binding site. His288 lines the spermidine pocket. Residue 308 to 309 (TA) coordinates NAD(+). Residues 314 to 316 (GSD) and 323 to 329 (EAVSWGK) each bind spermidine. The active-site Nucleophile is the Lys329. Residue 342 to 343 (DA) coordinates NAD(+).

This sequence belongs to the deoxyhypusine synthase family. Requires NAD(+) as cofactor.

It carries out the reaction [eIF5A protein]-L-lysine + spermidine = [eIF5A protein]-deoxyhypusine + propane-1,3-diamine. It participates in protein modification; eIF5A hypusination. Its function is as follows. Catalyzes the NAD-dependent oxidative cleavage of spermidine and the subsequent transfer of the butylamine moiety of spermidine to the epsilon-amino group of a critical lysine residue of the eIF-5A precursor protein to form the intermediate deoxyhypusine residue. This is the first step of the post-translational modification of that lysine into an unusual amino acid residue named hypusine. Hypusination is unique to mature eIF-5A factor and is essential for its function. This chain is Deoxyhypusine synthase (Dhps), found in Rattus norvegicus (Rat).